Reading from the N-terminus, the 79-residue chain is Reactive oxygen species modulator 1 (79 aa).

Residues 22–44 (GFVMGCAVGMAAGALFGTFSCLR) traverse the membrane as a helical segment. The sufficient for antibacterial activity stretch occupies residues 42-60 (CLRIGMRGRELMGGIGKTM).

It belongs to the MGR2 family.

The protein resides in the mitochondrion inner membrane. In terms of biological role, has antibacterial activity against a variety of bacteria including S.aureus, P.aeruginosa and M.tuberculosis. Acts by inducing bacterial membrane breakage. Its function is as follows. Induces production of reactive oxygen species (ROS) which are necessary for cell proliferation. May play a role in inducing oxidative DNA damage and replicative senescence. May play a role in the coordination of mitochondrial morphology and cell proliferation. This chain is Reactive oxygen species modulator 1 (ROMO1), found in Bos taurus (Bovine).